The following is a 546-amino-acid chain: T-complex protein 1 subunit zeta (546 aa).

Residue Ser2 is modified to N-acetylserine. Ser249 carries the phosphoserine modification.

The protein belongs to the TCP-1 chaperonin family. As to quaternary structure, heterooligomeric complex of about 850 to 900 kDa that forms two stacked rings, 12 to 16 nm in diameter.

Its subcellular location is the cytoplasm. Functionally, molecular chaperone; assists the folding of proteins upon ATP hydrolysis. Known to play a role, in vitro, in the folding of actin and tubulin. In yeast may play a role in mitotic spindle formation. This Saccharomyces cerevisiae (strain ATCC 204508 / S288c) (Baker's yeast) protein is T-complex protein 1 subunit zeta (CCT6).